We begin with the raw amino-acid sequence, 506 residues long: Cobyric acid synthase (506 aa).

The GATase cobBQ-type domain maps to 251–448; the sequence is DITIAIVQLP…LHGLFDSDAF (198 aa). C332 acts as the Nucleophile in catalysis. Residue H440 is part of the active site.

The protein belongs to the CobB/CobQ family. CobQ subfamily.

It participates in cofactor biosynthesis; adenosylcobalamin biosynthesis. Its function is as follows. Catalyzes amidations at positions B, D, E, and G on adenosylcobyrinic A,C-diamide. NH(2) groups are provided by glutamine, and one molecule of ATP is hydrogenolyzed for each amidation. The protein is Cobyric acid synthase of Salmonella choleraesuis (strain SC-B67).